Here is a 308-residue protein sequence, read N- to C-terminus: Testis-expressed protein 52 (308 aa).

In terms of tissue distribution, expressed in Testis.

This Mus musculus (Mouse) protein is Testis-expressed protein 52.